Consider the following 390-residue polypeptide: Neuromedin-B receptor (390 aa).

The segment at 1–20 is disordered; sequence MPPRSLPNLSLPTEASESEL. The Extracellular portion of the chain corresponds to 1 to 41; that stretch reads MPPRSLPNLSLPTEASESELEPEVWENDFLPDSDGTTAELV. Asn8 is a glycosylation site (N-linked (GlcNAc...) asparagine). A helical membrane pass occupies residues 42-65; sequence IRCVIPSLYLIIISVGLLGNIMLV. Residues 66–79 lie on the Cytoplasmic side of the membrane; sequence KIFLTNSTMRSVPN. The chain crosses the membrane as a helical span at residues 80-99; it reads IFISNLAAGDLLLLLTCVPV. At 100 to 117 the chain is on the extracellular side; the sequence is DASRYFFDEWVFGKLGCK. Residues Cys116 and Cys198 are joined by a disulfide bond. Residues 118–139 traverse the membrane as a helical segment; the sequence is LIPAIQLTSVGVSVFTLTALSA. Over 140–156 the chain is Cytoplasmic; the sequence is DRYRAIVNPMDMQTSGV. Residues 157–177 form a helical membrane-spanning segment; that stretch reads VLWTSLKAVGIWVVSVLLAVP. Residues 178–211 are Extracellular-facing; the sequence is EAVFSEVARIGSSDNSSFTACIPYPQTDELHPKI. An N-linked (GlcNAc...) asparagine glycan is attached at Asn192. The helical transmembrane segment at 212 to 235 threads the bilayer; it reads HSVLIFLVYFLIPLVIISIYYYHI. Residues 236–266 lie on the Cytoplasmic side of the membrane; that stretch reads AKTLIRSAHNLPGEYNEHTKKQMETRKRLAK. Residues 267-287 form a helical membrane-spanning segment; that stretch reads IVLVFVGCFVFCWFPNHILYL. Residues 288 to 299 are Extracellular-facing; it reads YRSFNYKEIDPS. A helical membrane pass occupies residues 300-327; the sequence is LGHMIVTLVARVLSFSNSCVNPFALYLL. At 328–390 the chain is on the cytoplasmic side; it reads SESFRKHFNS…GHSTKQEIAL (63 aa). Cys341 carries the S-palmitoyl cysteine lipid modification. Ser352 carries the phosphoserine modification.

It belongs to the G-protein coupled receptor 1 family. Brain (olfactory bulb and central thalamic regions), and esophagus.

The protein resides in the cell membrane. Receptor for neuromedin-B. Contributes to the maintenance of basal sigh rate through signaling in the pre-Botzinger complex, a cluster of several thousand neurons in the ventrolateral medulla responsible for inspiration during respiratory activity. Contributes to the induction of sneezing following exposure to chemical irritants or allergens which causes release of NMB by nasal sensory neurons and activation of NMBR-expressing neurons in the sneeze-evoking region of the brainstem. These in turn activate neurons of the caudal ventral respiratory group, giving rise to the sneezing response. Contributes to induction of acute itch, possibly through its activation on dorsal root ganglion neurons by the NMB peptide. Plays a role in the innate immune response to influenza A virus infection by enhancing interferon alpha expression and reducing expression of IL6. Plays a role in CSF1-induced proliferation of osteoclast precursors by contributing to the positive regulation of the expression of the CSF1 receptor CSF1R. This Rattus norvegicus (Rat) protein is Neuromedin-B receptor (Nmbr).